The chain runs to 225 residues: GrpE protein homolog 2, mitochondrial (225 aa).

Residues 1–32 constitute a mitochondrion transit peptide; it reads MAVRSLWACRLRVQRLLAWSAAWESKGWPLPF. K142 carries the post-translational modification N6-acetyllysine.

This sequence belongs to the GrpE family. Probable component of the PAM complex at least composed of a mitochondrial HSP70 protein, GRPEL1 or GRPEL2, TIMM44, TIMM16/PAM16 and TIMM14/DNAJC19.

Its subcellular location is the mitochondrion matrix. Its function is as follows. Essential component of the PAM complex, a complex required for the translocation of transit peptide-containing proteins from the inner membrane into the mitochondrial matrix in an ATP-dependent manner. Seems to control the nucleotide-dependent binding of mitochondrial HSP70 to substrate proteins. Stimulates ATPase activity of mt-HSP70. May also serve to modulate the interconversion of oligomeric (inactive) and monomeric (active) forms of mt-HSP70. The sequence is that of GrpE protein homolog 2, mitochondrial (GRPEL2) from Pongo abelii (Sumatran orangutan).